Here is a 231-residue protein sequence, read N- to C-terminus: L-ribulose-5-phosphate 4-epimerase SgbE (231 aa).

Substrate is bound by residues 27-28 (GN), 44-45 (SG), and 74-75 (SS). Residues Asp76, His95, and His97 each coordinate Zn(2+). Catalysis depends on Asp120, which acts as the Proton donor/acceptor. Zn(2+) is bound at residue His171. The active-site Proton donor/acceptor is Tyr229.

The protein belongs to the aldolase class II family. AraD/FucA subfamily. Zn(2+) is required as a cofactor.

The enzyme catalyses L-ribulose 5-phosphate = D-xylulose 5-phosphate. Its function is as follows. Catalyzes the interconversion of L-ribulose 5-phosphate (LRu5P) and D-xylulose 5-phosphate (D-Xu5P) via a retroaldol/aldol mechanism (carbon-carbon bond cleavage analogous to a class II aldolase reaction). May be involved in the utilization of 2,3-diketo-L-gulonate. In Escherichia coli (strain K12), this protein is L-ribulose-5-phosphate 4-epimerase SgbE.